The primary structure comprises 117 residues: Large ribosomal subunit protein bL20 (117 aa).

The protein belongs to the bacterial ribosomal protein bL20 family.

Binds directly to 23S ribosomal RNA and is necessary for the in vitro assembly process of the 50S ribosomal subunit. It is not involved in the protein synthesizing functions of that subunit. This chain is Large ribosomal subunit protein bL20, found in Roseiflexus castenholzii (strain DSM 13941 / HLO8).